Consider the following 133-residue polypeptide: MAKASTSGASRVRKKVKKNVSDGIAHVHASFNNTIITITDRQGNALSWATSGGAGFKGSRKSTPFAAQVAAETAGRVAMEYGIKTLEVRIKGPGPGRESSVRALNALGIKISSIADITPVPHNGCRPPKRRRI.

It belongs to the universal ribosomal protein uS11 family. Part of the 30S ribosomal subunit. Interacts with proteins S7 and S18. Binds to IF-3.

Located on the platform of the 30S subunit, it bridges several disparate RNA helices of the 16S rRNA. Forms part of the Shine-Dalgarno cleft in the 70S ribosome. In Bordetella avium (strain 197N), this protein is Small ribosomal subunit protein uS11.